The following is a 193-amino-acid chain: DNA damage-inducible transcript 4-like protein (193 aa).

This sequence belongs to the DDIT4 family.

It is found in the cytoplasm. Inhibits cell growth by regulating the TOR signaling pathway upstream of the TSC1-TSC2 complex and downstream of AKT1. This chain is DNA damage-inducible transcript 4-like protein (DDIT4L), found in Bos taurus (Bovine).